Here is a 308-residue protein sequence, read N- to C-terminus: MRIVYMGTPEFAVKPLAKLISHHEVALVVTKPDAAAGRGKKVISSPVKLFAQENHLRVITPLKFNEEVYQEILAVKPEVIVVAAYGKLLPREILNIPPYGCLNIHASLLPFYRGAAPIERCLMAGEKETGITIMFMDEGLDTGDIALQEKVAINQEITGGELRKILAEIGADLIIEALKRLREGGLPRVPQDHQLATYAPPLKKEDEIIHWADSAEKIRNQIRALNPVPGAYTVFRGKKIKIWKAKVGEFSGKKPGEIIFADRKNGFLVATGERGLQILELQPEGGKKMSWESFLNGYRPLVGETFEC.

107–110 (SLLP) provides a ligand contact to (6S)-5,6,7,8-tetrahydrofolate.

The protein belongs to the Fmt family.

The catalysed reaction is L-methionyl-tRNA(fMet) + (6R)-10-formyltetrahydrofolate = N-formyl-L-methionyl-tRNA(fMet) + (6S)-5,6,7,8-tetrahydrofolate + H(+). In terms of biological role, attaches a formyl group to the free amino group of methionyl-tRNA(fMet). The formyl group appears to play a dual role in the initiator identity of N-formylmethionyl-tRNA by promoting its recognition by IF2 and preventing the misappropriation of this tRNA by the elongation apparatus. This chain is Methionyl-tRNA formyltransferase, found in Carboxydothermus hydrogenoformans (strain ATCC BAA-161 / DSM 6008 / Z-2901).